Here is a 70-residue protein sequence, read N- to C-terminus: NADH-ubiquinone oxidoreductase chain 3 (70 aa).

The chain crosses the membrane as a helical span at residues 42-62 (FFVITLIFLIFDVEIYLLLPM).

Belongs to the complex I subunit 3 family.

The protein resides in the mitochondrion membrane. The catalysed reaction is a ubiquinone + NADH + 5 H(+)(in) = a ubiquinol + NAD(+) + 4 H(+)(out). Core subunit of the mitochondrial membrane respiratory chain NADH dehydrogenase (Complex I) that is believed to belong to the minimal assembly required for catalysis. Complex I functions in the transfer of electrons from NADH to the respiratory chain. The immediate electron acceptor for the enzyme is believed to be ubiquinone. In Artemia salina (Brine shrimp), this protein is NADH-ubiquinone oxidoreductase chain 3 (ND3).